Here is a 284-residue protein sequence, read N- to C-terminus: Bifunctional protein FolD (284 aa).

NADP(+) contacts are provided by residues 166-168 (GAS) and I232.

The protein belongs to the tetrahydrofolate dehydrogenase/cyclohydrolase family. In terms of assembly, homodimer.

The catalysed reaction is (6R)-5,10-methylene-5,6,7,8-tetrahydrofolate + NADP(+) = (6R)-5,10-methenyltetrahydrofolate + NADPH. It carries out the reaction (6R)-5,10-methenyltetrahydrofolate + H2O = (6R)-10-formyltetrahydrofolate + H(+). Its pathway is one-carbon metabolism; tetrahydrofolate interconversion. Functionally, catalyzes the oxidation of 5,10-methylenetetrahydrofolate to 5,10-methenyltetrahydrofolate and then the hydrolysis of 5,10-methenyltetrahydrofolate to 10-formyltetrahydrofolate. This chain is Bifunctional protein FolD, found in Glaesserella parasuis serovar 5 (strain SH0165) (Haemophilus parasuis).